The sequence spans 358 residues: Probable ABC transporter periplasmic-binding protein y4fP (358 aa).

The first 46 residues, 1–46 (MRNVIKLTWSRRKRSASLDKGENIMKLAFAFATAAIVVAAAFPALA), serve as a signal peptide directing secretion.

The protein belongs to the bacterial solute-binding protein 1 family.

Its subcellular location is the periplasm. Functionally, probably part of the binding-protein-dependent transport system y4fNOP. The sequence is that of Probable ABC transporter periplasmic-binding protein y4fP from Sinorhizobium fredii (strain NBRC 101917 / NGR234).